The chain runs to 111 residues: Cell division protein FtsB (111 aa).

Residues 1–3 (MRL) are Cytoplasmic-facing. A helical membrane pass occupies residues 4–21 (ITLFLLLLLLAIQYPLWL). The Periplasmic segment spans residues 22–111 (GKGGWLRVWD…PAALQPNHRH (90 aa)). A coiled-coil region spans residues 28-64 (RVWDMQKQVASQNQRNAELKQRNLKLEGEVKDLKEGT). The segment at 90–111 (PAPKTSETPLPPPAALQPNHRH) is disordered.

Belongs to the FtsB family. In terms of assembly, part of a complex composed of FtsB, FtsL and FtsQ.

It is found in the cell inner membrane. Its function is as follows. Essential cell division protein. May link together the upstream cell division proteins, which are predominantly cytoplasmic, with the downstream cell division proteins, which are predominantly periplasmic. The polypeptide is Cell division protein FtsB (Ralstonia nicotianae (strain ATCC BAA-1114 / GMI1000) (Ralstonia solanacearum)).